The primary structure comprises 464 residues: Probable LL-diaminopimelate aminotransferase, chloroplastic (464 aa).

A chloroplast-targeting transit peptide spans 1–39; the sequence is MAASPAAGAAAATVSSFVSPSSFSSVKASKPDRLRPARR. G102 contributes to the substrate binding site. Y132 lines the pyridoxal 5'-phosphate pocket. Substrate is bound by residues E135, K167, Y190, and N247. 5 residues coordinate pyridoxal 5'-phosphate: N247, D275, Y278, S305, and S307. An N6-(pyridoxal phosphate)lysine modification is found at K308. R316 is a binding site for pyridoxal 5'-phosphate. 2 residues coordinate substrate: N347 and R442.

This sequence belongs to the class-I pyridoxal-phosphate-dependent aminotransferase family. LL-diaminopimelate aminotransferase subfamily. Homodimer. Pyridoxal 5'-phosphate is required as a cofactor.

It localises to the plastid. The protein localises to the chloroplast. It catalyses the reaction (2S,6S)-2,6-diaminopimelate + 2-oxoglutarate = (S)-2,3,4,5-tetrahydrodipicolinate + L-glutamate + H2O + H(+). It participates in amino-acid biosynthesis; L-lysine biosynthesis via DAP pathway; LL-2,6-diaminopimelate from (S)-tetrahydrodipicolinate (aminotransferase route): step 1/1. Functionally, required for lysine biosynthesis. Catalyzes the direct conversion of tetrahydrodipicolinate to LL-diaminopimelate, a reaction that requires three enzymes in E.coli. This chain is Probable LL-diaminopimelate aminotransferase, chloroplastic (AGD2), found in Oryza sativa subsp. japonica (Rice).